We begin with the raw amino-acid sequence, 216 residues long: MKEIYAIFGGNFDPIHYGHITSAEKLSREISIKKIILLPNYGPPHRSKTKTSIIDRLKMIKFAIKDNKLFTISYLETKKNTTFYTIETLKKIRKKIGYLQPLCFIIGEDNLNNLNIWKDWKKILSLSHLLICPRIHIKKSNPKLKKWISDHTTKNSNLLHKKPFGFIFFSKMSMLNISSTAIRKSYYEGKSACGLLPSKIDKYILSKNLYKIYNQN.

It belongs to the NadD family.

It carries out the reaction nicotinate beta-D-ribonucleotide + ATP + H(+) = deamido-NAD(+) + diphosphate. It functions in the pathway cofactor biosynthesis; NAD(+) biosynthesis; deamido-NAD(+) from nicotinate D-ribonucleotide: step 1/1. Functionally, catalyzes the reversible adenylation of nicotinate mononucleotide (NaMN) to nicotinic acid adenine dinucleotide (NaAD). This is Probable nicotinate-nucleotide adenylyltransferase from Buchnera aphidicola subsp. Schizaphis graminum (strain Sg).